Consider the following 425-residue polypeptide: Serine--tRNA ligase (425 aa).

233–235 (TAE) is a binding site for L-serine. 264–266 (RRE) contacts ATP. Residue glutamate 287 coordinates L-serine. 351–354 (EISS) contacts ATP. L-serine is bound at residue serine 385.

Belongs to the class-II aminoacyl-tRNA synthetase family. Type-1 seryl-tRNA synthetase subfamily. Homodimer. The tRNA molecule binds across the dimer.

It is found in the cytoplasm. It carries out the reaction tRNA(Ser) + L-serine + ATP = L-seryl-tRNA(Ser) + AMP + diphosphate + H(+). It catalyses the reaction tRNA(Sec) + L-serine + ATP = L-seryl-tRNA(Sec) + AMP + diphosphate + H(+). It participates in aminoacyl-tRNA biosynthesis; selenocysteinyl-tRNA(Sec) biosynthesis; L-seryl-tRNA(Sec) from L-serine and tRNA(Sec): step 1/1. Functionally, catalyzes the attachment of serine to tRNA(Ser). Is also able to aminoacylate tRNA(Sec) with serine, to form the misacylated tRNA L-seryl-tRNA(Sec), which will be further converted into selenocysteinyl-tRNA(Sec). This Parasynechococcus marenigrum (strain WH8102) protein is Serine--tRNA ligase.